A 975-amino-acid polypeptide reads, in one-letter code: Nesprin-3 (975 aa).

The Cytoplasmic segment spans residues Met1–Arg925. 2 Spectrin repeats span residues Gln220–Gly325 and Arg647–Arg740. The segment at Leu778–His798 is disordered. In terms of domain architecture, KASH spans Cys917–Thr975. Residues Val926–Ala946 form a helical; Anchor for type IV membrane protein membrane-spanning segment. Over Gly947–Thr975 the chain is Perinuclear space.

This sequence belongs to the nesprin family. Core component of LINC complexes which are composed of inner nuclear membrane SUN domain-containing proteins coupled to outer nuclear membrane KASH domain-containing nesprins. SUN and KASH domain-containing proteins seem to bind each other promiscuously; however, differentially expression of LINC complex constituents can give rise to specific assemblies. Interacts with SUN1 and SUN2; probably forming respective LINC complexes. Interacts with PLEC (via actin-binding domain). Interacts with DST. Interacts with SYNE1. Interacts (via KASH domain) with TOR1A (ATP-bound); the interaction is required for SYNE3 nuclear envelope localization. Post-translationally, the disulfid bond with SUN1 or SUN2 is required for stability of the respective LINC complex under tensile forces. Ubiquitous.

It localises to the nucleus outer membrane. The protein resides in the nucleus envelope. It is found in the rough endoplasmic reticulum. As a component of the LINC (LInker of Nucleoskeleton and Cytoskeleton) complex involved in the connection between the nuclear lamina and the cytoskeleton. The nucleocytoplasmic interactions established by the LINC complex play an important role in the transmission of mechanical forces across the nuclear envelope and in nuclear movement and positioning. Probable anchoring protein which tethers the nucleus to the cytoskeleton by binding PLEC which can associate with the intermediate filament system. Plays a role in the regulation of aortic epithelial cell morphology, and is required for flow-induced centrosome polarization and directional migration in aortic endothelial cells. This chain is Nesprin-3 (Syne3), found in Mus musculus (Mouse).